The chain runs to 517 residues: PSTB2-interacting protein 1 (517 aa).

Interacts with PDR17/PSTB2 and SCS2.

In terms of biological role, phosphatidic acid-binding protein involved in interorganelle phosphatidylserine (PtdSer) transport. Linkks a PtdSer donor membrane (via binding of SCS2 and phosphatidic acid present in the donor membrane) with an acceptor membrane (via its interaction with PDR17), forming a zone of apposition that facilitates PtdSer transfer. The polypeptide is PSTB2-interacting protein 1 (Saccharomyces cerevisiae (strain ATCC 204508 / S288c) (Baker's yeast)).